A 603-amino-acid chain; its full sequence is MDRGSLLPFQLWCPRPFSKYSQNQPRPPSTALKPPVCPDTSSGTEPDHRPAHLESTPPAVAAEAPTSQPAPLLSTAASGDEGRVLLDTWYVIKPGNTKEKVAFFVAHQCGGSSRASSMKVKGHWGSDSSKAKRRRRCLEPTKAPPDQGGREGTPATEVTPTSSGDDVDLVSVAEMVALVEQRAALALQSYPRPSTPAPVVFVSADQGGPAKGLGSERRSGGGDCSRVAEAVAHFEAQRDSPPTKGLRKEERPGPGPGEVRIAFRISNVREPHSPDGNLPNGGGGRPGCAYPGSPGPGTRAKDKITCDLYQLISPSRDALPSNVEFLLARADEASEGETPAPTRPEDTPPAPPPPPARDCGASGFHVDVVVTGVVDACIFFGKDGTKNVKEETVCLTVSPEEPPPPGQLFFLQSRGPEGPPEPPPADIPSTVPGPDDSEGTTDTSLCRLYRHVSHDFLEIRFKIQRLLEPRQYMLLLPEHVLVKIFSFLPTRALAALKCTCHHFKGIIEAFGVRATDSRWSRDPLYRDDPCKQCRKRYEKGDVSLCRWHPKPYHHDLPYGRSYWMCCRRADRETPGCRLGLHDNNWVLPCNGVGGGRAGREEGR.

Residues 18–54 (SKYSQNQPRPPSTALKPPVCPDTSSGTEPDHRPAHLE) are disordered. 2 positions are modified to phosphoserine: Ser21 and Ser67. Disordered stretches follow at residues 113-165 (SRAS…SSGD), 235-301 (EAQR…TRAK), 332-359 (EASE…ARDC), and 412-442 (QSRG…GTTD). Thr347 is modified (phosphothreonine). Pro residues-rich tracts occupy residues 347–356 (TPPAPPPPPA) and 417–426 (EGPPEPPPAD). The 53-residue stretch at 470–522 (RQYMLLLPEHVLVKIFSFLPTRALAALKCTCHHFKGIIEAFGVRATDSRWSRD) folds into the F-box domain.

As to quaternary structure, part of a SCF (SKP1-cullin-F-box) protein ligase complex SCF(FBXO46) composed of CUL1, SKP1, RBX1 and FBXO46. Post-translationally, phosphorylated by ATM in response to DNA damage, promoting ubiquitination and degradation by the SCF(FBXO31) complex. ATM-phosphorylated FBXO46 is ubiquitinated and degradaded by the SCF(FBXO31) complex in response to DNA damage.

Its pathway is protein modification; protein ubiquitination. Functionally, substrate-recognition component of the SCF(FBXO46) protein ligase complex, which mediates the ubiquitination and degradation of target proteins. In absence of stress, the SCF(FBXO46) complex catalyzes ubiquitination and degradation of MTOR-phosphorylated FBXO31. This is F-box only protein 46 (Fbxo46) from Mus musculus (Mouse).